Consider the following 1013-residue polypeptide: Alpha-2-macroglobulin homolog (1013 aa).

A disordered region spans residues 804-844; sequence AQRGANGERDGLRETVPVRPAGARQLLSGSGSVGADKAGGN.

Belongs to the protease inhibitor I39 (alpha-2-macroglobulin) family. Bacterial alpha-2-macroglobulin subfamily.

The sequence is that of Alpha-2-macroglobulin homolog from Deinococcus radiodurans (strain ATCC 13939 / DSM 20539 / JCM 16871 / CCUG 27074 / LMG 4051 / NBRC 15346 / NCIMB 9279 / VKM B-1422 / R1).